The chain runs to 230 residues: Transmembrane 4 L6 family member 20 (230 aa).

The Lumenal portion of the chain corresponds to 1 to 11; that stretch reads MTCCEGWTSCN. The helical transmembrane segment at 12–32 threads the bilayer; that stretch reads GFSLLVLLLLGVTLNAIPLIL. Residues 33 to 44 are Cytoplasmic-facing; it reads NFVDEDQFFENP. Residues 45–65 form a helical membrane-spanning segment; that stretch reads ISCFEWWFPGIIGAGVMAIPA. The Lumenal segment spans residues 66–83; the sequence is TTMSLAARKRACCNNKTG. The helical transmembrane segment at 84-104 threads the bilayer; sequence MFLSSLLNAITVIGAAYCLLV. Topologically, residues 105 to 185 are cytoplasmic; sequence SIQALAEGPL…HFNSIENQHR (81 aa). The chain crosses the membrane as a helical span at residues 186–206; sequence IIHFSVFLGLLLVGILEILFG. Topologically, residues 207-230 are lumenal; the sequence is LSQIIIGFFGCLCGGVSNGRSQIV.

The protein belongs to the L6 tetraspanin family. Post-translationally, glycosylated at Asn-132 in presence of ceramide which inverts the orientation of TM4SF20 in membranes exposing these residues to the endoplasmic reticulum lumen. In terms of processing, cleaved by signal peptidase at Ser-14 but the peptide does not act as a signal peptide. Cleavage is inhibited by ceramide which inverts the orientation of TM4SF20 in membranes exposing the N-terminus to the cytosol and not to the endoplasmic reticulum lumen.

It localises to the membrane. It is found in the endoplasmic reticulum membrane. Functionally, polytopic transmembrane protein. Inhibits regulated intramembrane proteolysis (RIP) of CREB3L1, inhibiting its activation and the induction of collagen synthesis. In response to ceramide, which alters TM4SF20 membrane topology, stimulates RIP activation of CREB3L1. Ceramide reverses the direction through which transmembrane helices are translocated into the endoplasmic reticulum membrane during translation of TM4SF20, this mechanism is called 'regulated alternative translocation' (RAT) and regulates the function of the transmembrane protein. The chain is Transmembrane 4 L6 family member 20 (TM4SF20) from Bos taurus (Bovine).